Reading from the N-terminus, the 1131-residue chain is Probable secreted beta-glucosidase adg3 (1131 aa).

Positions 1–23 (MPSKIEKICLLLLGFTAASNVNA) are cleaved as a signal peptide. Residues Asn-58, Asn-123, Asn-252, Asn-551, Asn-593, Asn-631, and Asn-689 are each glycosylated (N-linked (GlcNAc...) asparagine). Residues 609 to 819 (GTTSSTSEIV…SSPISSNSVT (211 aa)) form a disordered region. Low complexity predominate over residues 623 to 715 (SNSNTGSLNG…YSDPTTTITS (93 aa)). Polar residues predominate over residues 716–725 (EVSSILSSPT). Positions 726-737 (SMQSSVSRPQSS) are enriched in low complexity. A compositionally biased stretch (polar residues) spans 738-763 (GDASGFNTIFTSISQSSDGETSGYTI). 2 stretches are compositionally biased toward low complexity: residues 764 to 773 (SSNSSQNSAS) and 780 to 819 (TSSS…NSVT). Residues Asn-766, Asn-806, and Asn-857 are each glycosylated (N-linked (GlcNAc...) asparagine). Positions 893–909 (STSNSGSTSYSIPSSSS) are enriched in low complexity. Positions 893 to 918 (STSNSGSTSYSIPSSSSRNEGTTSYS) are disordered. A glycan (N-linked (GlcNAc...) asparagine) is linked at Asn-920. The segment covering 977-1027 (LTVKPESSLSSSTTSGLTSSSSTIPSSTRSESNSESASTSSASKRSSSSTS) has biased composition (low complexity). Positions 977–1031 (LTVKPESSLSSSTTSGLTSSSSTIPSSTRSESNSESASTSSASKRSSSSTSLVQS) are disordered.

Belongs to the SUN family.

The protein localises to the secreted. In terms of biological role, cell surface beta-glucosidase involved in cell wall biogenesis,. This Schizosaccharomyces pombe (strain 972 / ATCC 24843) (Fission yeast) protein is Probable secreted beta-glucosidase adg3 (adg3).